Reading from the N-terminus, the 462-residue chain is UDP-N-acetylmuramate--L-alanine ligase (462 aa).

Gly119–Thr125 lines the ATP pocket.

It belongs to the MurCDEF family.

The protein localises to the cytoplasm. It catalyses the reaction UDP-N-acetyl-alpha-D-muramate + L-alanine + ATP = UDP-N-acetyl-alpha-D-muramoyl-L-alanine + ADP + phosphate + H(+). It functions in the pathway cell wall biogenesis; peptidoglycan biosynthesis. In terms of biological role, cell wall formation. The chain is UDP-N-acetylmuramate--L-alanine ligase from Parabacteroides distasonis (strain ATCC 8503 / DSM 20701 / CIP 104284 / JCM 5825 / NCTC 11152).